The chain runs to 862 residues: Protein translocase subunit SecA (862 aa).

Residues Gln-88, 106–110, and Asp-506 contribute to the ATP site; that span reads GEGKT. Residues Cys-839, Cys-841, Cys-850, and His-851 each coordinate Zn(2+).

Belongs to the SecA family. Monomer and homodimer. Part of the essential Sec protein translocation apparatus which comprises SecA, SecYEG and auxiliary proteins SecDF-YajC and YidC. Zn(2+) is required as a cofactor.

The protein resides in the cell inner membrane. The protein localises to the cytoplasm. It carries out the reaction ATP + H2O + cellular proteinSide 1 = ADP + phosphate + cellular proteinSide 2.. Its function is as follows. Part of the Sec protein translocase complex. Interacts with the SecYEG preprotein conducting channel. Has a central role in coupling the hydrolysis of ATP to the transfer of proteins into and across the cell membrane, serving as an ATP-driven molecular motor driving the stepwise translocation of polypeptide chains across the membrane. The polypeptide is Protein translocase subunit SecA (Campylobacter jejuni subsp. doylei (strain ATCC BAA-1458 / RM4099 / 269.97)).